The primary structure comprises 330 residues: Biotin synthase (330 aa).

Positions 43 to 272 (FMGDKFDTCS…RAFLRFSGGR (230 aa)) constitute a Radical SAM core domain. Residues Cys61, Cys65, and Cys68 each coordinate [4Fe-4S] cluster. Positions 105, 137, 197, and 267 each coordinate [2Fe-2S] cluster.

Belongs to the radical SAM superfamily. Biotin synthase family. As to quaternary structure, homodimer. The cofactor is [4Fe-4S] cluster. Requires [2Fe-2S] cluster as cofactor.

The catalysed reaction is (4R,5S)-dethiobiotin + (sulfur carrier)-SH + 2 reduced [2Fe-2S]-[ferredoxin] + 2 S-adenosyl-L-methionine = (sulfur carrier)-H + biotin + 2 5'-deoxyadenosine + 2 L-methionine + 2 oxidized [2Fe-2S]-[ferredoxin]. The protein operates within cofactor biosynthesis; biotin biosynthesis; biotin from 7,8-diaminononanoate: step 2/2. Its function is as follows. Catalyzes the conversion of dethiobiotin (DTB) to biotin by the insertion of a sulfur atom into dethiobiotin via a radical-based mechanism. This is Biotin synthase from Porphyromonas gingivalis (strain ATCC 33277 / DSM 20709 / CIP 103683 / JCM 12257 / NCTC 11834 / 2561).